The chain runs to 241 residues: Proteasome subunit alpha (241 aa).

This sequence belongs to the peptidase T1A family. As to quaternary structure, the 20S proteasome core is composed of 14 alpha and 14 beta subunits that assemble into four stacked heptameric rings, resulting in a barrel-shaped structure. The two inner rings, each composed of seven catalytic beta subunits, are sandwiched by two outer rings, each composed of seven alpha subunits. The catalytic chamber with the active sites is on the inside of the barrel. Has a gated structure, the ends of the cylinder being occluded by the N-termini of the alpha-subunits. Is capped at one or both ends by the proteasome regulatory ATPase, PAN.

The protein resides in the cytoplasm. The formation of the proteasomal ATPase PAN-20S proteasome complex, via the docking of the C-termini of PAN into the intersubunit pockets in the alpha-rings, triggers opening of the gate for substrate entry. Interconversion between the open-gate and close-gate conformations leads to a dynamic regulation of the 20S proteasome proteolysis activity. Functionally, component of the proteasome core, a large protease complex with broad specificity involved in protein degradation. The polypeptide is Proteasome subunit alpha (Saccharolobus islandicus (strain M.16.4 / Kamchatka #3) (Sulfolobus islandicus)).